A 71-amino-acid chain; its full sequence is Translational regulator CsrA (71 aa).

The protein belongs to the CsrA/RsmA family. In terms of assembly, homodimer; the beta-strands of each monomer intercalate to form a hydrophobic core, while the alpha-helices form wings that extend away from the core.

Its subcellular location is the cytoplasm. A translational regulator that binds mRNA to regulate translation initiation and/or mRNA stability. Usually binds in the 5'-UTR at or near the Shine-Dalgarno sequence preventing ribosome-binding, thus repressing translation. Its main target seems to be the major flagellin gene, while its function is anatagonized by FliW. This Clostridium botulinum (strain Alaska E43 / Type E3) protein is Translational regulator CsrA.